The chain runs to 101 residues: Citrate lyase acyl carrier protein (101 aa).

S14 carries the O-(phosphoribosyl dephospho-coenzyme A)serine modification.

This sequence belongs to the CitD family. In terms of assembly, oligomer with a subunit composition of (alpha,beta,gamma)6.

The protein resides in the cytoplasm. In terms of biological role, covalent carrier of the coenzyme of citrate lyase. This is Citrate lyase acyl carrier protein from Streptococcus uberis (strain ATCC BAA-854 / 0140J).